We begin with the raw amino-acid sequence, 206 residues long: Glycerol-3-phosphate acyltransferase (206 aa).

The next 5 helical transmembrane spans lie at 14-34 (IALA…GLIL), 67-87 (ATLL…GYFL), 91-111 (AAII…WIGF), 124-144 (LLGV…AVAF), and 148-168 (YSSL…LILG).

Belongs to the PlsY family. Probably interacts with PlsX.

It localises to the cell inner membrane. It catalyses the reaction an acyl phosphate + sn-glycerol 3-phosphate = a 1-acyl-sn-glycero-3-phosphate + phosphate. The protein operates within lipid metabolism; phospholipid metabolism. Its function is as follows. Catalyzes the transfer of an acyl group from acyl-phosphate (acyl-PO(4)) to glycerol-3-phosphate (G3P) to form lysophosphatidic acid (LPA). This enzyme utilizes acyl-phosphate as fatty acyl donor, but not acyl-CoA or acyl-ACP. This is Glycerol-3-phosphate acyltransferase from Rhizobium etli (strain CIAT 652).